The primary structure comprises 168 residues: NADH-quinone oxidoreductase subunit B (168 aa).

4 residues coordinate [4Fe-4S] cluster: cysteine 49, cysteine 50, cysteine 114, and cysteine 144.

This sequence belongs to the complex I 20 kDa subunit family. In terms of assembly, NDH-1 is composed of 14 different subunits. Subunits NuoB, C, D, E, F, and G constitute the peripheral sector of the complex. [4Fe-4S] cluster is required as a cofactor.

The protein resides in the cell membrane. The catalysed reaction is a quinone + NADH + 5 H(+)(in) = a quinol + NAD(+) + 4 H(+)(out). In terms of biological role, NDH-1 shuttles electrons from NADH, via FMN and iron-sulfur (Fe-S) centers, to quinones in the respiratory chain. Couples the redox reaction to proton translocation (for every two electrons transferred, four hydrogen ions are translocated across the cytoplasmic membrane), and thus conserves the redox energy in a proton gradient. The chain is NADH-quinone oxidoreductase subunit B from Wolbachia sp. subsp. Brugia malayi (strain TRS).